Reading from the N-terminus, the 226-residue chain is Ribonuclease 3 (226 aa).

Residues 6–128 (INRLQRKLGY…LIGGVFLDSD (123 aa)) enclose the RNase III domain. E41 contacts Mg(2+). D45 is an active-site residue. Mg(2+) is bound by residues D114 and E117. E117 is an active-site residue. A DRBM domain is found at 155–225 (DPKTRLQEYL…AEQALKKLEL (71 aa)).

The protein belongs to the ribonuclease III family. In terms of assembly, homodimer. Mg(2+) is required as a cofactor.

The protein localises to the cytoplasm. It catalyses the reaction Endonucleolytic cleavage to 5'-phosphomonoester.. Functionally, digests double-stranded RNA. Involved in the processing of primary rRNA transcript to yield the immediate precursors to the large and small rRNAs (23S and 16S). Processes some mRNAs, and tRNAs when they are encoded in the rRNA operon. Processes pre-crRNA and tracrRNA of type II CRISPR loci if present in the organism. The sequence is that of Ribonuclease 3 from Escherichia coli O139:H28 (strain E24377A / ETEC).